The chain runs to 740 residues: Ribosomal protein S6 kinase alpha-3 (740 aa).

The interval 1 to 26 (MPLAQLADPWQKMAVESPSDSAENGQ) is disordered. Positions 68–327 (FELLKVLGQG…VEEIKRHSFF (260 aa)) constitute a Protein kinase 1 domain. ATP is bound by residues 74–82 (LGQGSFGKV) and lysine 100. Aspartate 193 acts as the Proton acceptor in catalysis. Serine 227 carries the phosphoserine; by PDPK1 modification. In terms of domain architecture, AGC-kinase C-terminal spans 328-397 (STIDWNKLYR…VAITSDDESQ (70 aa)). Threonine 365 carries the post-translational modification Phosphothreonine. Serine 369 and serine 375 each carry phosphoserine. Serine 386 is modified (phosphoserine; by autocatalysis and MAPKAPK2). The residue at position 415 (serine 415) is a Phosphoserine. One can recognise a Protein kinase 2 domain in the interval 422 to 679 (YEVKEDIGVG…AALVLRHPWI (258 aa)). ATP is bound by residues 428–436 (IGVGSYSVC) and lysine 451. At tyrosine 529 the chain carries Phosphotyrosine; by FGFR3. Aspartate 539 acts as the Proton acceptor in catalysis. Phosphoserine occurs at positions 556 and 715.

The protein belongs to the protein kinase superfamily. AGC Ser/Thr protein kinase family. S6 kinase subfamily. As to quaternary structure, forms a complex with either MAPK1/ERK2 or MAPK3/ERK1 in quiescent cells. Transiently dissociates following mitogenic stimulation. Interacts with NFATC4, ETV1/ER81 and FGFR1. Mg(2+) serves as cofactor. In terms of processing, activated by phosphorylation at Ser-227 by PDPK1. Autophosphorylated on Ser-386, as part of the activation process. May be phosphorylated at Thr-365 and Ser-369 by MAPK1/ERK2 and MAPK3/ERK1. Can also be activated via phosphorylation at Ser-386 by MAPKAPK2. N-terminal myristoylation results in an activated kinase in the absence of added growth factors. As to expression, intestine, thymus, lung, heart and brain.

The protein localises to the nucleus. It localises to the cytoplasm. The catalysed reaction is L-seryl-[protein] + ATP = O-phospho-L-seryl-[protein] + ADP + H(+). The enzyme catalyses L-threonyl-[protein] + ATP = O-phospho-L-threonyl-[protein] + ADP + H(+). Its activity is regulated as follows. Upon extracellular signal or mitogen stimulation, phosphorylated at Thr-577 in the C-terminal kinase domain (CTKD) by MAPK1/ERK2 and MAPK3/ERK1. The activated CTKD then autophosphorylates Ser-386, allowing binding of PDPK1, which in turn phosphorylates Ser-227 in the N-terminal kinase domain (NTDK) leading to the full activation of the protein and subsequent phosphorylation of the substrates by the NTKD. Serine/threonine-protein kinase that acts downstream of ERK (MAPK1/ERK2 and MAPK3/ERK1) signaling and mediates mitogenic and stress-induced activation of the transcription factors CREB1, ETV1/ER81 and NR4A1/NUR77, regulates translation through RPS6 and EIF4B phosphorylation, and mediates cellular proliferation, survival, and differentiation by modulating mTOR signaling and repressing pro-apoptotic function of BAD and DAPK1. In fibroblast, is required for EGF-stimulated phosphorylation of CREB1 and histone H3 at 'Ser-10', which results in the subsequent transcriptional activation of several immediate-early genes. In response to mitogenic stimulation (EGF and PMA), phosphorylates and activates NR4A1/NUR77 and ETV1/ER81 transcription factors and the cofactor CREBBP. Upon insulin-derived signal, acts indirectly on the transcription regulation of several genes by phosphorylating GSK3B at 'Ser-9' and inhibiting its activity. Phosphorylates RPS6 in response to serum or EGF via an mTOR-independent mechanism and promotes translation initiation by facilitating assembly of the preinitiation complex. In response to insulin, phosphorylates EIF4B, enhancing EIF4B affinity for the EIF3 complex and stimulating cap-dependent translation. Is involved in the mTOR nutrient-sensing pathway by directly phosphorylating TSC2 at 'Ser-1798', which potently inhibits TSC2 ability to suppress mTOR signaling, and mediates phosphorylation of RPTOR, which regulates mTORC1 activity and may promote rapamycin-sensitive signaling independently of the PI3K/AKT pathway. Mediates cell survival by phosphorylating the pro-apoptotic proteins BAD and DAPK1 and suppressing their pro-apoptotic function. Promotes the survival of hepatic stellate cells by phosphorylating CEBPB in response to the hepatotoxin carbon tetrachloride (CCl4). Is involved in cell cycle regulation by phosphorylating the CDK inhibitor CDKN1B, which promotes CDKN1B association with 14-3-3 proteins and prevents its translocation to the nucleus and inhibition of G1 progression. In LPS-stimulated dendritic cells, is involved in TLR4-induced macropinocytosis, and in myeloma cells, acts as effector of FGFR3-mediated transformation signaling, after direct phosphorylation at Tyr-529 by FGFR3. Negatively regulates EGF-induced MAPK1/3 phosphorylation via phosphorylation of SOS1. Phosphorylates SOS1 at 'Ser-1134' and 'Ser-1161' that create YWHAB and YWHAE binding sites and which contribute to the negative regulation of MAPK1/3 phosphorylation. Phosphorylates EPHA2 at 'Ser-897', the RPS6KA-EPHA2 signaling pathway controls cell migration. Acts as a regulator of osteoblast differentiation by mediating phosphorylation of ATF4, thereby promoting ATF4 transactivation activity. In Mus musculus (Mouse), this protein is Ribosomal protein S6 kinase alpha-3 (Rps6ka3).